Consider the following 279-residue polypeptide: Biotin synthase (279 aa).

Positions Met1 to Arg228 constitute a Radical SAM core domain. [4Fe-4S] cluster is bound by residues Cys17, Cys21, and Cys24. [2Fe-2S] cluster-binding residues include Cys61, Cys96, Cys154, and Arg221.

This sequence belongs to the radical SAM superfamily. Biotin synthase family. As to quaternary structure, homodimer. [4Fe-4S] cluster serves as cofactor. Requires [2Fe-2S] cluster as cofactor.

It catalyses the reaction (4R,5S)-dethiobiotin + (sulfur carrier)-SH + 2 reduced [2Fe-2S]-[ferredoxin] + 2 S-adenosyl-L-methionine = (sulfur carrier)-H + biotin + 2 5'-deoxyadenosine + 2 L-methionine + 2 oxidized [2Fe-2S]-[ferredoxin]. It functions in the pathway cofactor biosynthesis; biotin biosynthesis; biotin from 7,8-diaminononanoate: step 2/2. Functionally, catalyzes the conversion of dethiobiotin (DTB) to biotin by the insertion of a sulfur atom into dethiobiotin via a radical-based mechanism. This is Biotin synthase from Wolinella succinogenes (strain ATCC 29543 / DSM 1740 / CCUG 13145 / JCM 31913 / LMG 7466 / NCTC 11488 / FDC 602W) (Vibrio succinogenes).